We begin with the raw amino-acid sequence, 326 residues long: Malate dehydrogenase (326 aa).

Residue 12 to 18 (GGTGQIA) participates in NAD(+) binding. Substrate contacts are provided by Arg-93 and Arg-99. Residues Asn-106, Gln-113, and 130–132 (VGN) each bind NAD(+). Substrate is bound by residues Asn-132 and Arg-163. His-188 acts as the Proton acceptor in catalysis.

Belongs to the LDH/MDH superfamily. MDH type 2 family.

It catalyses the reaction (S)-malate + NAD(+) = oxaloacetate + NADH + H(+). In terms of biological role, catalyzes the reversible oxidation of malate to oxaloacetate. The chain is Malate dehydrogenase from Chlamydia muridarum (strain MoPn / Nigg).